Reading from the N-terminus, the 332-residue chain is MDKSLFYNPQKMLSYDRILNFVIGARGIGKSYAMKVYPINRFIKYGEQFIYVRRYKPELAKVSNYFNDVAQEFPDHELVVKGRRFYIDGKLAGWAIPLSVWQSEKSNAYPNVSTIVFDEFIREKDNSNYIPNEVSALLNLMDTVFRNRERVRCICLSNAVSVVNPYFLFFNLVPDVNKRFNVYDDALIEIPDSLDFSSERRKTRFGRLIDGTEYGEMSLDNQFIGDSHVFIEKRSKDSKFVFSIVYNGFTLGVWVDVNQGLMYVDTAHDPSTKNVYTLTTDDLNENMMLITNYKNNYHLRKLASAFMNGYLRFDNQVIRNIAYELFRKMRIQ.

An ATPase region spans residues 1–207; the sequence is MDKSLFYNPQ…SERRKTRFGR (207 aa). 24–31 is an ATP binding site; that stretch reads GARGIGKS. The DNA-binding stretch occupies residues 233–332; the sequence is KRSKDSKFVF…YELFRKMRIQ (100 aa).

This sequence belongs to the phi29likevirus gp16 family. Homopentamer. Interacts with the packaging RNA (pRNA). Part of a DNA-gp3-gp16 complex.

The enzyme catalyses ATP + H2O = ADP + phosphate + H(+). In terms of biological role, ATPase required for the genome encapsidation reaction. Part of the active packaging motor via the binding to the packaging RNA (pRNA), itself fixed to the head-tail connector at the unique portal vertex of the prohead. Binds and supercoils the pre-formed, unit-length DNA bound to gp3 to produce an initiation complex for DNA packaging. Provides the energy to actively pump the viral DNA into the prohead. Approximately one molecule of ATP is used in the packaging of 2 bp of viral DNA. ATP hydrolysis results in a conformational change that causes the arginine/lysine finger of one subunit to move into the active site of its neighbor, where it interacts with the negatively charged oxygens on the gamma-phosphate of ATP. After packaging, the ATPase and the pRNA are released from the prohead. The chain is DNA packaging protein (16) from Bacillus subtilis (Bacteriophage PZA).